The primary structure comprises 21 residues: Pedibin (21 aa).

Residues 1-21 (AGEDVSHELEEKEKALANHSE) form a disordered region.

In terms of biological role, morphogenetically active peptide. Active in foot development. The polypeptide is Pedibin (Hydra vulgaris (Hydra)).